The sequence spans 481 residues: Acyl-CoA ligase cnsG (481 aa).

The PTS2-type peroxisomal targeting signal signature appears at 3 to 11; it reads SPQLPPSMK. Residues 124-132, 263-268, Asp-353, and Arg-368 contribute to the ATP site; these read KSGTTGNPK and NGYGMT. Position 268 (Thr-268) interacts with substrate. CoA is bound by residues 376–378 and 446–448; these read GGL and AIF. Lys-466 provides a ligand contact to ATP.

The protein belongs to the ATP-dependent AMP-binding enzyme family.

It participates in alkaloid biosynthesis. Acyl-CoA ligase; part of the gene cluster that mediates the biosynthesis of communesins, a prominent class of indole alkaloids with great potential as pharmaceuticals. Communesins are biosynthesized by the coupling of tryptamine and aurantioclavine, two building blocks derived from L-tryptophan. The L-tryptophan decarboxylase cnsB converts L-tryptophan to tryptamine, whereas the tryptophan dimethylallyltransferase cnsF converts L-tryptophan to 4-dimethylallyl tryptophan which is further transformed to aurantioclavine by the aurantioclavine synthase cnsA, probably aided by the catalase cnsD. The cytochrome P450 monooxygenase cnsC catalyzes the heterodimeric coupling between the two different indole moieties, tryptamine and aurantioclavine, to construct vicinal quaternary stereocenters and yield the heptacyclic communesin scaffold. The O-methyltransferase cnsE then methylates the communesin scaffold to produce communesin K, the simplest characterized communesin that contains the heptacyclic core. The dioxygenase cnsJ converts communesin K into communesin I. Acylation to introduce the hexadienyl group at position N16 of communesin I by the acyltransferase cnsK leads to the production of communesin B. The hexadienyl group is produced by the highly reducing polyketide synthase cnsI, before being hydrolytically removed from cnsI by the serine hydrolase cnsH, converted into hexadienyl-CoA by the CoA ligase cnsG, and then transferred to communesin I by cnsK. Surprisingly, cnsK may also be a promiscuous acyltransferase that can tolerate a range of acyl groups, including acetyl-, propionyl-, and butyryl-CoA, which lead to communesins A, G and H respectively. The roles of the alpha-ketoglutarate-dependent dioxygenases cnsM and cnsP have still to be determined. The sequence is that of Acyl-CoA ligase cnsG from Penicillium expansum (Blue mold rot fungus).